A 445-amino-acid polypeptide reads, in one-letter code: Histone acetyltransferase ESA1 (445 aa).

Residue Ser-17 is modified to Phosphoserine. Residues Ile-22 to Leu-74 enclose the Tudor-knot domain. The disordered stretch occupies residues Glu-88–Asp-114. Polar residues predominate over residues Thr-99–Leu-109. One can recognise an MYST-type HAT domain in the interval Ala-162 to Pro-433. A C2HC MYST-type; degenerate zinc finger spans residues Ile-195–Leu-220. Positions Arg-245 to Tyr-266 match the ESA1-RPD3 motif motif. An N6-acetyllysine; by autocatalysis modification is found at Lys-262. Acetyl-CoA is bound by residues Ala-303 to Thr-307 and Gln-312 to Lys-318. Residue Glu-338 is the Proton donor/acceptor of the active site. Ser-342 contributes to the acetyl-CoA binding site.

It belongs to the MYST (SAS/MOZ) family. In terms of assembly, component of the NuA4 histone acetyltransferase complex composed of at least ACT1, ARP4, EAF3, EAF5, EAF6, EAF7, EPL1, ESA1, SWC4, TRA1, VID21, YAF9 and YNG2. The complex interacts with histones H4 (HHF1 and HHF2), H3 (HHT1 and HHT2) and H2A (HTA1 and HTA2). Autoacetylation at Lys-262 is required for proper function.

The enzyme catalyses L-lysyl-[histone] + acetyl-CoA = N(6)-acetyl-L-lysyl-[histone] + CoA + H(+). The catalysed reaction is L-lysyl-[protein] + acetyl-CoA = N(6)-acetyl-L-lysyl-[protein] + CoA + H(+). It carries out the reaction 2-hydroxyisobutanoyl-CoA + L-lysyl-[protein] = N(6)-(2-hydroxyisobutanoyl)-L-lysyl-[protein] + CoA + H(+). It catalyses the reaction (2E)-butenoyl-CoA + L-lysyl-[protein] = N(6)-(2E)-butenoyl-L-lysyl-[protein] + CoA + H(+). Catalytic component of the NuA4 histone acetyltransferase (HAT), a multiprotein complex involved in epigenetic transcriptional activation of selected genes principally by acetylation of nucleosomal histones H4, H3, H2B, H2A and H2A variant H2A.Z. Acetylates histone H4 to form H4K5ac, H4K8ac, H4K12ac and H4K16ac, histone H3 to form H3K14ac, histone H2B to form H2BK16ac, histone H2A to form H2AK4ac and H2AK7ac, and histone variant H2A.Z to form H2A.ZK14ac. Acetylation of histones gives a specific tag for epigenetic transcription initiation and elongation. Acetylation of histone H4 is essential for DNA double-strand break repair through homologous recombination. Involved in cell cycle progression. Recruitment to promoters depends on H3K4me. Also acetylates non-histone proteins, such as ATG3 and PAH1. Regulates autophagy by acetylating ATG3, controlling interaction the interaction between ATG3 and ATG8 and ATG8 lipidation. Acts as a regulator of fatty-acid-induced triacylglycerol synthesis by catalyzing acetylation of PAH1, thereby promoting the synthesis of diacylglycerol. In addition to protein acetyltransferase, can use different acyl-CoA substrates, such as 2-hydroxyisobutanoyl-CoA (2-hydroxyisobutyryl-CoA) or (2E)-butenoyl-CoA (crotonyl-CoA), and is able to mediate protein 2-hydroxyisobutyrylation and crotonylation, respectively. Catalyzes histone crotonylation. The protein is Histone acetyltransferase ESA1 of Saccharomyces cerevisiae (strain ATCC 204508 / S288c) (Baker's yeast).